A 340-amino-acid polypeptide reads, in one-letter code: Dihydroorotate dehydrogenase (quinone) (340 aa).

FMN contacts are provided by residues 65-69 and Thr89; that span reads AGADK. Lys69 is a substrate binding site. Position 114-118 (114-118) interacts with substrate; it reads NRNGF. FMN-binding residues include Asn142 and Asn175. Residue Asn175 coordinates substrate. Ser178 acts as the Nucleophile in catalysis. Residue Asn180 coordinates substrate. Positions 220 and 248 each coordinate FMN. 249 to 250 lines the substrate pocket; sequence NT. Residues Gly271, Gly300, and 321-322 each bind FMN; that span reads YS.

It belongs to the dihydroorotate dehydrogenase family. Type 2 subfamily. In terms of assembly, monomer. Requires FMN as cofactor.

It is found in the cell membrane. It catalyses the reaction (S)-dihydroorotate + a quinone = orotate + a quinol. Its pathway is pyrimidine metabolism; UMP biosynthesis via de novo pathway; orotate from (S)-dihydroorotate (quinone route): step 1/1. In terms of biological role, catalyzes the conversion of dihydroorotate to orotate with quinone as electron acceptor. The protein is Dihydroorotate dehydrogenase (quinone) of Actinobacillus succinogenes (strain ATCC 55618 / DSM 22257 / CCUG 43843 / 130Z).